The sequence spans 359 residues: 3-dehydroquinate synthase (359 aa).

NAD(+) is bound by residues Asp-71 to Lys-76, Gly-105 to Asp-109, Thr-129 to Thr-130, Lys-142, Lys-151, and Thr-169 to Thr-172. Residues Glu-184, His-247, and His-264 each contribute to the Zn(2+) site.

The protein belongs to the sugar phosphate cyclases superfamily. Dehydroquinate synthase family. NAD(+) is required as a cofactor. Co(2+) serves as cofactor. Requires Zn(2+) as cofactor.

Its subcellular location is the cytoplasm. The enzyme catalyses 7-phospho-2-dehydro-3-deoxy-D-arabino-heptonate = 3-dehydroquinate + phosphate. The protein operates within metabolic intermediate biosynthesis; chorismate biosynthesis; chorismate from D-erythrose 4-phosphate and phosphoenolpyruvate: step 2/7. Catalyzes the conversion of 3-deoxy-D-arabino-heptulosonate 7-phosphate (DAHP) to dehydroquinate (DHQ). The protein is 3-dehydroquinate synthase of Neisseria meningitidis serogroup B (strain ATCC BAA-335 / MC58).